Reading from the N-terminus, the 267-residue chain is Acyl-[acyl-carrier-protein]--UDP-N-acetylglucosamine O-acyltransferase (267 aa).

This sequence belongs to the transferase hexapeptide repeat family. LpxA subfamily. As to quaternary structure, homotrimer.

It is found in the cytoplasm. It carries out the reaction a (3R)-hydroxyacyl-[ACP] + UDP-N-acetyl-alpha-D-glucosamine = a UDP-3-O-[(3R)-3-hydroxyacyl]-N-acetyl-alpha-D-glucosamine + holo-[ACP]. It participates in glycolipid biosynthesis; lipid IV(A) biosynthesis; lipid IV(A) from (3R)-3-hydroxytetradecanoyl-[acyl-carrier-protein] and UDP-N-acetyl-alpha-D-glucosamine: step 1/6. Involved in the biosynthesis of lipid A, a phosphorylated glycolipid that anchors the lipopolysaccharide to the outer membrane of the cell. In Cupriavidus metallidurans (strain ATCC 43123 / DSM 2839 / NBRC 102507 / CH34) (Ralstonia metallidurans), this protein is Acyl-[acyl-carrier-protein]--UDP-N-acetylglucosamine O-acyltransferase.